We begin with the raw amino-acid sequence, 491 residues long: Probable glycine dehydrogenase (decarboxylating) subunit 2 (491 aa).

Position 273 is an N6-(pyridoxal phosphate)lysine (Lys273).

Belongs to the GcvP family. C-terminal subunit subfamily. The glycine cleavage system is composed of four proteins: P, T, L and H. In this organism, the P 'protein' is a heterodimer of two subunits. It depends on pyridoxal 5'-phosphate as a cofactor.

The catalysed reaction is N(6)-[(R)-lipoyl]-L-lysyl-[glycine-cleavage complex H protein] + glycine + H(+) = N(6)-[(R)-S(8)-aminomethyldihydrolipoyl]-L-lysyl-[glycine-cleavage complex H protein] + CO2. In terms of biological role, the glycine cleavage system catalyzes the degradation of glycine. The P protein binds the alpha-amino group of glycine through its pyridoxal phosphate cofactor; CO(2) is released and the remaining methylamine moiety is then transferred to the lipoamide cofactor of the H protein. In Bacillus anthracis (strain A0248), this protein is Probable glycine dehydrogenase (decarboxylating) subunit 2.